The chain runs to 459 residues: Bifunctional protein GlmU (459 aa).

The segment at 1–230 (MVKRYAVILA…FEETIGVNDR (230 aa)) is pyrophosphorylase. Residues 9–12 (LAAG), K23, Q73, and 78–79 (GT) contribute to the UDP-N-acetyl-alpha-D-glucosamine site. Mg(2+) is bound at residue D103. UDP-N-acetyl-alpha-D-glucosamine-binding residues include G140, E155, N170, and N228. N228 contributes to the Mg(2+) binding site. Residues 231–251 (VALAEAEKIMRERICRKHMMN) are linker. The segment at 252-459 (GVTIIDPAHT…VDRLSIKKNS (208 aa)) is N-acetyltransferase. UDP-N-acetyl-alpha-D-glucosamine-binding residues include R333 and K351. H363 acts as the Proton acceptor in catalysis. 2 residues coordinate UDP-N-acetyl-alpha-D-glucosamine: Y366 and N377. Residues 386–387 (NY), A423, and R440 contribute to the acetyl-CoA site.

It in the N-terminal section; belongs to the N-acetylglucosamine-1-phosphate uridyltransferase family. The protein in the C-terminal section; belongs to the transferase hexapeptide repeat family. As to quaternary structure, homotrimer. It depends on Mg(2+) as a cofactor.

The protein localises to the cytoplasm. It catalyses the reaction alpha-D-glucosamine 1-phosphate + acetyl-CoA = N-acetyl-alpha-D-glucosamine 1-phosphate + CoA + H(+). It carries out the reaction N-acetyl-alpha-D-glucosamine 1-phosphate + UTP + H(+) = UDP-N-acetyl-alpha-D-glucosamine + diphosphate. It participates in nucleotide-sugar biosynthesis; UDP-N-acetyl-alpha-D-glucosamine biosynthesis; N-acetyl-alpha-D-glucosamine 1-phosphate from alpha-D-glucosamine 6-phosphate (route II): step 2/2. It functions in the pathway nucleotide-sugar biosynthesis; UDP-N-acetyl-alpha-D-glucosamine biosynthesis; UDP-N-acetyl-alpha-D-glucosamine from N-acetyl-alpha-D-glucosamine 1-phosphate: step 1/1. The protein operates within bacterial outer membrane biogenesis; LPS lipid A biosynthesis. In terms of biological role, catalyzes the last two sequential reactions in the de novo biosynthetic pathway for UDP-N-acetylglucosamine (UDP-GlcNAc). The C-terminal domain catalyzes the transfer of acetyl group from acetyl coenzyme A to glucosamine-1-phosphate (GlcN-1-P) to produce N-acetylglucosamine-1-phosphate (GlcNAc-1-P), which is converted into UDP-GlcNAc by the transfer of uridine 5-monophosphate (from uridine 5-triphosphate), a reaction catalyzed by the N-terminal domain. In Geobacillus sp. (strain WCH70), this protein is Bifunctional protein GlmU.